We begin with the raw amino-acid sequence, 101 residues long: Putative regulatory protein PrgT (101 aa).

Might be involved in the expression of prgA, but is not required for activation of the expression of prgB. The chain is Putative regulatory protein PrgT (prgT) from Enterococcus faecalis (strain ATCC 47077 / OG1RF).